We begin with the raw amino-acid sequence, 453 residues long: Acyl-coenzyme A thioesterase 2, mitochondrial (453 aa).

Residues 1-42 (MVASSFAVLRASRLCQWGWKSWTQLSGPPPLSTGGRTTFART) constitute a mitochondrion transit peptide. Residue Lys83 is modified to N6-acetyllysine. Catalysis depends on charge relay system residues Ser273, Asp365, and His399. Lys447 carries the N6-succinyllysine modification.

It belongs to the C/M/P thioester hydrolase family. Monomer. Post-translationally, the N-terminus is blocked. In terms of tissue distribution, constitutively expressed in heart and brown fat. Strongly induced in liver, and weakly in kidney, in peroxisome proliferator treated rat.

It localises to the mitochondrion matrix. It catalyses the reaction hexadecanoyl-CoA + H2O = hexadecanoate + CoA + H(+). The catalysed reaction is tetradecanoyl-CoA + H2O = tetradecanoate + CoA + H(+). It carries out the reaction octadecanoyl-CoA + H2O = octadecanoate + CoA + H(+). The enzyme catalyses eicosanoyl-CoA + H2O = eicosanoate + CoA + H(+). It catalyses the reaction decanoyl-CoA + H2O = decanoate + CoA + H(+). The catalysed reaction is dodecanoyl-CoA + H2O = dodecanoate + CoA + H(+). It carries out the reaction (9Z)-octadecenoyl-CoA + H2O = (9Z)-octadecenoate + CoA + H(+). The enzyme catalyses (9Z)-hexadecenoyl-CoA + H2O = (9Z)-hexadecenoate + CoA + H(+). It catalyses the reaction (9E)-octadecenoyl-CoA + H2O = (9E)-octadecenoate + CoA + H(+). The catalysed reaction is (9Z,12Z)-octadecadienoyl-CoA + H2O = (9Z,12Z)-octadecadienoate + CoA + H(+). It functions in the pathway lipid metabolism; fatty acid metabolism. In terms of biological role, catalyzes the hydrolysis of acyl-CoAs into free fatty acids and coenzyme A (CoASH), regulating their respective intracellular levels. Displays higher activity toward long chain acyl CoAs (C14-C20). The enzyme is involved in enhancing the hepatic fatty acid oxidation in mitochondria. The polypeptide is Acyl-coenzyme A thioesterase 2, mitochondrial (Acot2) (Rattus norvegicus (Rat)).